Here is a 285-residue protein sequence, read N- to C-terminus: Protease HtpX homolog (285 aa).

Transmembrane regions (helical) follow at residues threonine 7–glycine 27 and glycine 30–aspartate 50. Position 131 (histidine 131) interacts with Zn(2+). Residue glutamate 132 is part of the active site. Histidine 135 is a binding site for Zn(2+). The next 2 membrane-spanning stretches (helical) occupy residues isoleucine 146–glycine 166 and isoleucine 177–isoleucine 197. Glutamate 202 contributes to the Zn(2+) binding site.

It belongs to the peptidase M48B family. Zn(2+) serves as cofactor.

The protein resides in the cell inner membrane. This Burkholderia ambifaria (strain MC40-6) protein is Protease HtpX homolog.